The chain runs to 425 residues: L-lysine 2,3-aminomutase (425 aa).

Residues 113-325 form the Radical SAM core domain; that stretch reads HRYPDRVLLL…GLRGHTSGYA (213 aa). [4Fe-4S] cluster is bound by residues Cys-127, Cys-131, and Cys-134. The residue at position 339 (Lys-339) is an N6-(pyridoxal phosphate)lysine.

This sequence belongs to the radical SAM superfamily. KamA family. As to quaternary structure, homotetramer. Requires [4Fe-4S] cluster as cofactor. Pyridoxal 5'-phosphate is required as a cofactor.

The enzyme catalyses L-lysine = (3S)-3,6-diaminohexanoate. The protein operates within amino-acid degradation; L-lysine degradation via acetate pathway. Catalyzes the interconversion of L-alpha-lysine and L-beta-lysine. The chain is L-lysine 2,3-aminomutase from Fusobacterium nucleatum subsp. nucleatum (strain ATCC 25586 / DSM 15643 / BCRC 10681 / CIP 101130 / JCM 8532 / KCTC 2640 / LMG 13131 / VPI 4355).